The primary structure comprises 414 residues: Serine hydroxymethyltransferase (414 aa).

(6S)-5,6,7,8-tetrahydrofolate contacts are provided by residues Leu121 and 125–127; that span reads GHL. The residue at position 229 (Lys229) is an N6-(pyridoxal phosphate)lysine.

Belongs to the SHMT family. In terms of assembly, homodimer. Requires pyridoxal 5'-phosphate as cofactor.

It is found in the cytoplasm. The enzyme catalyses (6R)-5,10-methylene-5,6,7,8-tetrahydrofolate + glycine + H2O = (6S)-5,6,7,8-tetrahydrofolate + L-serine. It participates in one-carbon metabolism; tetrahydrofolate interconversion. The protein operates within amino-acid biosynthesis; glycine biosynthesis; glycine from L-serine: step 1/1. Catalyzes the reversible interconversion of serine and glycine with tetrahydrofolate (THF) serving as the one-carbon carrier. This reaction serves as the major source of one-carbon groups required for the biosynthesis of purines, thymidylate, methionine, and other important biomolecules. Also exhibits THF-independent aldolase activity toward beta-hydroxyamino acids, producing glycine and aldehydes, via a retro-aldol mechanism. This is Serine hydroxymethyltransferase from Verminephrobacter eiseniae (strain EF01-2).